A 156-amino-acid chain; its full sequence is Small ribosomal subunit protein uS7 (156 aa).

This sequence belongs to the universal ribosomal protein uS7 family. As to quaternary structure, part of the 30S ribosomal subunit. Contacts proteins S9 and S11.

In terms of biological role, one of the primary rRNA binding proteins, it binds directly to 16S rRNA where it nucleates assembly of the head domain of the 30S subunit. Is located at the subunit interface close to the decoding center, probably blocks exit of the E-site tRNA. This Thermoanaerobacter pseudethanolicus (strain ATCC 33223 / 39E) (Clostridium thermohydrosulfuricum) protein is Small ribosomal subunit protein uS7.